Here is a 341-residue protein sequence, read N- to C-terminus: Farnesyl pyrophosphate synthase (341 aa).

K48, R51, and Q86 together coordinate isopentenyl diphosphate. The Mg(2+) site is built by D93 and D97. R102 lines the dimethylallyl diphosphate pocket. Residue R103 coordinates isopentenyl diphosphate. Residues K190, T191, Q229, and K246 each contribute to the dimethylallyl diphosphate site.

This sequence belongs to the FPP/GGPP synthase family. The cofactor is Mg(2+).

Its subcellular location is the cytoplasm. The catalysed reaction is isopentenyl diphosphate + dimethylallyl diphosphate = (2E)-geranyl diphosphate + diphosphate. It carries out the reaction isopentenyl diphosphate + (2E)-geranyl diphosphate = (2E,6E)-farnesyl diphosphate + diphosphate. The protein operates within isoprenoid biosynthesis; farnesyl diphosphate biosynthesis; farnesyl diphosphate from geranyl diphosphate and isopentenyl diphosphate: step 1/1. It functions in the pathway isoprenoid biosynthesis; geranyl diphosphate biosynthesis; geranyl diphosphate from dimethylallyl diphosphate and isopentenyl diphosphate: step 1/1. Catalyzes the sequential condensation of isopentenyl pyrophosphate with the allylic pyrophosphates, dimethylallyl pyrophosphate, and then with the resultant geranylpyrophosphate to the ultimate product farnesyl pyrophosphate. The sequence is that of Farnesyl pyrophosphate synthase (FPS1) from Helianthus annuus (Common sunflower).